We begin with the raw amino-acid sequence, 1312 residues long: Rho GTPase-activating protein gacG (1312 aa).

Disordered stretches follow at residues 52 to 74 (VENN…KRSQ), 111 to 158 (SNNN…SSSD), 314 to 519 (ISSS…PRNF), 762 to 831 (NSIS…SSTG), 1185 to 1230 (NNNN…SSSV), and 1282 to 1312 (TGTS…IVEE). 2 stretches are compositionally biased toward low complexity: residues 53–67 (ENNN…NSEN) and 111–146 (SNNN…YSPR). Residues 147–158 (NNNNNFTESSSD) show a composition bias toward polar residues. 3 stretches are compositionally biased toward low complexity: residues 328 to 355 (TTAA…ANNS), 373 to 397 (HHSS…IGNS), and 414 to 436 (LNLT…NNGN). Over residues 437–449 (EVIQSSSSTSSPR) the composition is skewed to polar residues. Over residues 479–507 (SSTNSLNNSTSSLKSSNNNILQQQQQQQQ) the composition is skewed to low complexity. Polar residues-rich tracts occupy residues 508–518 (HYDSAPTTPRN) and 763–776 (SIST…GNIA). Residues 792–816 (NNNNNNNNNNNNNNNNNNNNNNNNN) show a composition bias toward low complexity. The Rho-GAP domain maps to 1030 to 1212 (SKIDPITGFN…HHNSHHHRDN (183 aa)). The segment covering 1196 to 1210 (HHHHHHHHHNSHHHR) has biased composition (basic residues). Composition is skewed to low complexity over residues 1213 to 1222 (NNNNSNNNSS) and 1282 to 1305 (TGTS…RSPS).

The protein localises to the cytoplasm. Rho GTPase-activating protein involved in the signal transduction pathway. In Dictyostelium discoideum (Social amoeba), this protein is Rho GTPase-activating protein gacG (gacG).